A 473-amino-acid chain; its full sequence is Putative amidase AmiC (473 aa).

Catalysis depends on charge relay system residues Lys-82 and Ser-157. Residue Ser-181 is the Acyl-ester intermediate of the active site.

It belongs to the amidase family.

It carries out the reaction a monocarboxylic acid amide + H2O = a monocarboxylate + NH4(+). This chain is Putative amidase AmiC (amiC), found in Mycobacterium bovis (strain ATCC BAA-935 / AF2122/97).